A 267-amino-acid chain; its full sequence is Putative carbamate hydrolase RutD (267 aa).

The 102-residue stretch at 14–115 (PTLVLSAGLG…EKLVVVNGWP (102 aa)) folds into the AB hydrolase-1 domain.

This sequence belongs to the AB hydrolase superfamily. Hydrolase RutD family.

It catalyses the reaction carbamate + 2 H(+) = NH4(+) + CO2. Its function is as follows. Involved in pyrimidine catabolism. May facilitate the hydrolysis of carbamate, a reaction that can also occur spontaneously. In Serratia proteamaculans (strain 568), this protein is Putative carbamate hydrolase RutD.